The primary structure comprises 129 residues: Histone H2B.1 (129 aa).

Positions 1 to 19 (MAPKAEKKPASKAPAEKKP) are enriched in basic and acidic residues. The tract at residues 1–37 (MAPKAEKKPASKAPAEKKPAAKKTASTDSKKRTKTRK) is disordered. Residues lysine 7 and lysine 8 each carry the N6-acetyllysine; alternate modification. Glycyl lysine isopeptide (Lys-Gly) (interchain with G-Cter in SUMO); alternate cross-links involve residues lysine 7 and lysine 8. The residue at position 11 (serine 11) is a Phosphoserine. Lysine 12 bears the N6-acetyllysine mark. Residue lysine 17 is modified to N6-acetyllysine; alternate. Lysine 17 is covalently cross-linked (Glycyl lysine isopeptide (Lys-Gly) (interchain with G-Cter in SUMO); alternate). Lysine 18 is covalently cross-linked (Glycyl lysine isopeptide (Lys-Gly) (interchain with G-Cter in SUMO)). A Glycyl lysine isopeptide (Lys-Gly) (interchain with G-Cter in ubiquitin) cross-link involves residue lysine 123.

The protein belongs to the histone H2B family. The nucleosome is a histone octamer containing two molecules each of H2A, H2B, H3 and H4 assembled in one H3-H4 heterotetramer and two H2A-H2B heterodimers. The octamer wraps approximately 147 bp of DNA. Post-translationally, monoubiquitinated by the UBC2-BRE1 complex to form H2BK123ub1. H2BK123ub1 gives a specific tag for epigenetic transcriptional activation and is also prerequisite for H3K4me and H3K79me formation. H2BK123ub1 also modulates the formation of double-strand breaks during meiosis and is a prerequisite for DNA-damage checkpoint activation. In terms of processing, phosphorylated by STE20 to form H2BS10ph during progression through meiotic prophase. May be correlated with chromosome condensation. Acetylated by GCN5 to form H2BK11ac and H2BK16ac. H2BK16ac can also be formed by ESA1. Acetylation of N-terminal lysines and particularly formation of H2BK11acK16ac has a positive effect on transcription. Post-translationally, sumoylation to form H2BK6su or H2BK7su, and probably also H2BK16su or H2BK17su, occurs preferentially near the telomeres and represses gene transcription.

The protein localises to the nucleus. Its subcellular location is the chromosome. Its function is as follows. Core component of nucleosome. Nucleosomes wrap and compact DNA into chromatin, limiting DNA accessibility to the cellular machineries which require DNA as a template. Histones thereby play a central role in transcription regulation, DNA repair, DNA replication and chromosomal stability. DNA accessibility is regulated via a complex set of post-translational modifications of histones, also called histone code, and nucleosome remodeling. The chain is Histone H2B.1 (HTB1) from Meyerozyma guilliermondii (strain ATCC 6260 / CBS 566 / DSM 6381 / JCM 1539 / NBRC 10279 / NRRL Y-324) (Yeast).